We begin with the raw amino-acid sequence, 193 residues long: Peptidyl-tRNA hydrolase (193 aa).

A tRNA-binding site is contributed by Tyr-14. His-19 serves as the catalytic Proton acceptor. The tRNA site is built by Phe-64, Asn-66, and Asn-112.

This sequence belongs to the PTH family. In terms of assembly, monomer.

The protein resides in the cytoplasm. The enzyme catalyses an N-acyl-L-alpha-aminoacyl-tRNA + H2O = an N-acyl-L-amino acid + a tRNA + H(+). Hydrolyzes ribosome-free peptidyl-tRNAs (with 1 or more amino acids incorporated), which drop off the ribosome during protein synthesis, or as a result of ribosome stalling. In terms of biological role, catalyzes the release of premature peptidyl moieties from peptidyl-tRNA molecules trapped in stalled 50S ribosomal subunits, and thus maintains levels of free tRNAs and 50S ribosomes. The protein is Peptidyl-tRNA hydrolase of Bartonella quintana (strain Toulouse) (Rochalimaea quintana).